The following is a 422-amino-acid chain: Probable isoprenylcysteine alpha-carbonyl methylesterase ICMEL2 (422 aa).

The span at 1-16 (MQLSPERCRPMSENRE) shows a compositional bias: basic and acidic residues. The segment at 1 to 55 (MQLSPERCRPMSENREAWSANSEEMELLHGSNRLSSPEHVRRRVSGNSSEDGSPR) is disordered. Transmembrane regions (helical) follow at residues 97–117 (LLALACYAMLLMPGFLQVAYL) and 152–172 (VVVFVTGGAWIIGYKAWGSLL). Residues 158–160 (GGA) and 229–231 (QSA) each bind substrate. Residues Ser-230, Asp-331, and His-363 contribute to the active site.

It belongs to the AB hydrolase superfamily. Isoprenylcysteine methylesterase family. As to expression, expressed at low levels in flowers and siliques.

It localises to the endoplasmic reticulum membrane. The protein localises to the golgi apparatus membrane. It carries out the reaction [protein]-C-terminal S-[(2E,6E)-farnesyl]-L-cysteine methyl ester + H2O = [protein]-C-terminal S-[(2E,6E)-farnesyl]-L-cysteine + methanol + H(+). Catalyzes the demethylation of isoprenylcysteine methylesters. May act as a negative regulator of ABA signaling. This Arabidopsis thaliana (Mouse-ear cress) protein is Probable isoprenylcysteine alpha-carbonyl methylesterase ICMEL2.